The following is a 1165-amino-acid chain: Peroxisomal ATPase PEX6 (1165 aa).

Belongs to the AAA ATPase family. In terms of assembly, interacts with PEX1; forming the PEX1-PEX6 AAA ATPase complex, which is composed of a heterohexamer formed by a trimer of PEX1-PEX6 dimers.

Its subcellular location is the membrane. The enzyme catalyses ATP + H2O = ADP + phosphate + H(+). In terms of biological role, component of the PEX1-PEX6 AAA ATPase complex involved in peroxisome biosynthesis. The complex acts as a protein dislocase complex that mediates the ATP-dependent extraction of the PEX5 receptor from peroxisomal membranes, an essential step for PEX5 recycling. Specifically recognizes PEX5 monoubiquitinated at 'Cys-6', and pulls it out of the peroxisome lumen through the PEX2-PEX10-PEX12 retrotranslocation channel. Extraction by the PEX1-PEX6 AAA ATPase complex is accompanied by unfolding of the TPR repeats and release of bound cargo from PEX5. The protein is Peroxisomal ATPase PEX6 of Komagataella pastoris (Yeast).